The sequence spans 194 residues: uncharacterized protein (194 aa).

The Exonuclease domain maps to 20–185 (RIFIDTETTG…ADCRMTLGII (166 aa)).

This is an uncharacterized protein from Escherichia coli (Bacteriophage 186).